Consider the following 442-residue polypeptide: D-galactonate dehydratase family member SSBG_02010 (442 aa).

Position 246 (D246) interacts with Mg(2+). Residue H248 participates in D-arabinonate binding. Mg(2+)-binding residues include E272 and E298. E298, R319, H348, and E375 together coordinate D-arabinonate.

The protein belongs to the mandelate racemase/muconate lactonizing enzyme family. GalD subfamily.

Has no detectable activity with D-mannonate and with a panel of 70 other acid sugars (in vitro), in spite of the conservation of the residues that are expected to be important for catalytic activity and cofactor binding. May have evolved a divergent function. This is D-galactonate dehydratase family member SSBG_02010 from Streptomyces sp. (strain SPB074).